We begin with the raw amino-acid sequence, 161 residues long: Nucleotide-binding protein Csal_2524 (161 aa).

The protein belongs to the YajQ family.

In terms of biological role, nucleotide-binding protein. In Chromohalobacter salexigens (strain ATCC BAA-138 / DSM 3043 / CIP 106854 / NCIMB 13768 / 1H11), this protein is Nucleotide-binding protein Csal_2524.